The sequence spans 149 residues: Large ribosomal subunit protein uL13 (149 aa).

Belongs to the universal ribosomal protein uL13 family. In terms of assembly, part of the 50S ribosomal subunit.

This protein is one of the early assembly proteins of the 50S ribosomal subunit, although it is not seen to bind rRNA by itself. It is important during the early stages of 50S assembly. The sequence is that of Large ribosomal subunit protein uL13 from Thermotoga maritima (strain ATCC 43589 / DSM 3109 / JCM 10099 / NBRC 100826 / MSB8).